We begin with the raw amino-acid sequence, 248 residues long: 2,3-bisphosphoglycerate-dependent phosphoglycerate mutase (248 aa).

Substrate-binding positions include 8-15, 21-22, Arg60, 87-90, Lys98, 114-115, and 183-184; these read RHGESTWN, TG, ERHY, RR, and GN. The active-site Tele-phosphohistidine intermediate is the His9. Glu87 (proton donor/acceptor) is an active-site residue.

This sequence belongs to the phosphoglycerate mutase family. BPG-dependent PGAM subfamily. Homodimer.

It catalyses the reaction (2R)-2-phosphoglycerate = (2R)-3-phosphoglycerate. It participates in carbohydrate degradation; glycolysis; pyruvate from D-glyceraldehyde 3-phosphate: step 3/5. Catalyzes the interconversion of 2-phosphoglycerate and 3-phosphoglycerate. In Cupriavidus pinatubonensis (strain JMP 134 / LMG 1197) (Cupriavidus necator (strain JMP 134)), this protein is 2,3-bisphosphoglycerate-dependent phosphoglycerate mutase.